We begin with the raw amino-acid sequence, 1550 residues long: Adhesion G protein-coupled receptor L3 (1550 aa).

The first 19 residues, 1 to 19 (MCPPQLFILMMLLAPVVHG), serve as a signal peptide directing secretion. Topologically, residues 20–948 (GKHNERHPAL…VHDLLLDVIT (929 aa)) are extracellular. A disordered region spans residues 34–80 (RHAEHSPGGPLPPRHLLQQPAAERSTAHRGQGPRGTARGVRGPGAPG). An SUEL-type lectin domain is found at 103-192 (SCESYPIELR…KYLEVQYECV (90 aa)). 5 disulfide bridges follow: Cys104-Cys134, Cys113-Cys191, Cys146-Cys178, Cys159-Cys165, and Cys203-Cys385. An N-linked (GlcNAc...) asparagine glycan is attached at Asn161. The Olfactomedin-like domain maps to 202 to 461 (LCPGLLKGVY…VVKYSLDFGP (260 aa)). An interaction with FLRT3 region spans residues 317–347 (YHDTSPYRWGGKSDIDLAVDENGLWVIYATE). Ca(2+) is bound by residues Asp332, Asn380, Ala381, and Val435. A disordered region spans residues 518–538 (NLGRSTTPSLPGRRNRSTSTP). N-linked (GlcNAc...) asparagine glycosylation is found at Asn532, Asn616, Asn839, Asn884, and Asn910. The region spanning 755–934 (DIVRENTDNI…AVLMAHVEVK (180 aa)) is the GAIN-B domain. 2 disulfides stabilise this stretch: Cys885-Cys916 and Cys904-Cys918. The tract at residues 885-934 (CSFWSYSKRTMTGYWSTQGCRLLTTNKTHTTCSCNHLTNFAVLMAHVEVK) is GPS. The stachel stretch occupies residues 922–938 (TNFAVLMAHVEVKHSDA). A helical membrane pass occupies residues 949 to 969 (WVGILLSLVCLLICIFTFCFF). Residues 970–977 (RGLQSDRN) are Cytoplasmic-facing. Residues 978 to 998 (TIHKNLCISLFVAELLFLIGI) traverse the membrane as a helical segment. Asn999 carries N-linked (GlcNAc...) asparagine glycosylation. Residues 999-1006 (NRTDQPIA) are Extracellular-facing. Residues 1007–1027 (CAVFAALLHFFFLAAFTWMFL) traverse the membrane as a helical segment. At 1028-1048 (EGVQLYIMLVEVFESEHSRRK) the chain is on the cytoplasmic side. The helical transmembrane segment at 1049 to 1069 (YFYLVGYGMPALIVAVSAAVD) threads the bilayer. Over 1070-1087 (YRSYGTDKVCWLRLDTYF) the chain is Extracellular. Residues 1088 to 1108 (IWSFIGPATLIIMLNVIFLGI) form a helical membrane-spanning segment. The Cytoplasmic portion of the chain corresponds to 1109 to 1141 (ALYKMFHHTAILKPESGCLDNINYEDNRPFIKS). The helical transmembrane segment at 1142 to 1162 (WVIGAIALLCLLGLTWAFGLM) threads the bilayer. The Extracellular segment spans residues 1163–1168 (YINEST). An N-linked (GlcNAc...) asparagine glycan is attached at Asn1165. The chain crosses the membrane as a helical span at residues 1169–1189 (VIMAYLFTIFNSLQGMFIFIF). The Cytoplasmic segment spans residues 1190–1550 (HCVLQKKVRK…KGPAHLVTSL (361 aa)). The disordered stretch occupies residues 1213–1236 (KSTESSIGSGKTSGSRTPGRYSTG). Ser1253 bears the Phosphoserine mark. Disordered regions lie at residues 1410 to 1435 (LLPP…PQDH) and 1528 to 1550 (PPNK…VTSL). Position 1535 is a phosphoserine (Ser1535). A PDZ-binding motif is present at residues 1545 to 1550 (HLVTSL).

The protein belongs to the G-protein coupled receptor 2 family. LN-TM7 subfamily. In terms of assembly, heterodimer of 2 chains generated by proteolytic processing; the large extracellular N-terminal fragment and the membrane-bound C-terminal fragment predominantly remain associated and non-covalently linked. Interacts (via olfactomedin-like domain) with FLRT1 (via extracellular domain). Interacts (via olfactomedin-like domain) with FLRT2 (via extracellular domain). Interacts (via olfactomedin-like domain) with FLRT3 (via extracellular domain); the interaction is direct. Interacts (via extracellular domain) with TENM1. Interacts (via extracellular domain) with TENM2. Interacts (via extracellular domain) with TENM3. Identified in a complex with FLRT3 and UNC5B; does not interact with UNC5B by itself. Identified in a complex with FLRT3 and UNC5D; does not interact with UNC5D by itself. Interacts (via PDZ-binding motif) with SHANK3. Interacts (via PDZ-binding motif) with DLG4. Post-translationally, autoproteolytically processed at the GPS region of the GAIN-B domain; this cleavage modulates receptor activity. In terms of tissue distribution, predominantly expressed in brain, followed by heart, placenta, pancreas, kidney and testis.

It localises to the cell membrane. The protein resides in the postsynaptic cell membrane. Its subcellular location is the cell projection. The protein localises to the axon. It is found in the cell junction. Its activity is regulated as follows. Forms a heterodimer of 2 chains generated by proteolytic processing that remain associated through non-covalent interactions mediated by the GAIN-B domain. In the inactivated receptor, the Stachel sequence (also named stalk) is embedded in the GAIN-B domain, where it adopts a beta-strand conformation. On activation, the Stachel moves into the 7 transmembrane region and adopts a twisted hook-shaped configuration that forms contacts within the receptor, leading to coupling of a G-alpha protein, which activates signaling. The cleaved GAIN-B and N-terminal domains can then dissociate from the rest of the receptor. Orphan adhesion G-protein coupled receptor (aGPCR), which mediates synapse specificity. Ligand binding causes a conformation change that triggers signaling via guanine nucleotide-binding proteins (G proteins) and modulates the activity of downstream effectors. ADGRL3 is coupled with different classes of G alpha proteins, such as G(12)/G(13), G(s), G(i) or G(q), depending on the context. Coupling to G(12)/G(13) G proteins, which mediates the activation Rho small GTPases is the most efficient. Following G-protein coupled receptor activation, associates with cell adhesion molecules that are expressed at the surface of adjacent cells to direct synapse specificity. Specifically mediates the establishment of Schaffer-collateral synapses formed by CA3-region axons on CA1-region pyramidal neurons in the hippocampus. Localizes to postsynaptic spines in excitatory synapses in the S.oriens and S.radiatum and interacts with presynaptic cell adhesion molecules FLRT3 and TENM2, promoting synapse formation. Plays a role in the development of glutamatergic synapses in the cortex. Important in determining the connectivity rates between the principal neurons in the cortex. Functionally, orphan adhesion G-protein coupled receptor (aGPCR), which mediates synapse specificity. Ligand binding causes a conformation change that triggers signaling via guanine nucleotide-binding proteins (G proteins) and modulates the activity of downstream effectors, such as adenylate cyclase. Isoform 1 is specifically coupled to G(s) G proteins and mediates activation of adenylate cyclase activity. Following G-protein coupled receptor activation, undergoes liquid-liquid phase transition, associates with (1) cell adhesion molecules that are expressed at the surface of adjacent cells, as well as (2) PDZ-containing proteins, such as SHANK3 and DLG4, in the cytoplasm to direct synapse formation. This is Adhesion G protein-coupled receptor L3 from Rattus norvegicus (Rat).